Here is a 186-residue protein sequence, read N- to C-terminus: Ribosome-recycling factor (186 aa).

It belongs to the RRF family.

It is found in the cytoplasm. Functionally, responsible for the release of ribosomes from messenger RNA at the termination of protein biosynthesis. May increase the efficiency of translation by recycling ribosomes from one round of translation to another. The polypeptide is Ribosome-recycling factor (Wolinella succinogenes (strain ATCC 29543 / DSM 1740 / CCUG 13145 / JCM 31913 / LMG 7466 / NCTC 11488 / FDC 602W) (Vibrio succinogenes)).